Here is a 149-residue protein sequence, read N- to C-terminus: Urease accessory protein UreE (149 aa).

This sequence belongs to the UreE family.

It localises to the cytoplasm. Functionally, involved in urease metallocenter assembly. Binds nickel. Probably functions as a nickel donor during metallocenter assembly. The protein is Urease accessory protein UreE of Ureaplasma parvum serovar 3 (strain ATCC 700970).